Reading from the N-terminus, the 293-residue chain is tRNA pseudouridine synthase B (293 aa).

Asp38 functions as the Nucleophile in the catalytic mechanism.

It belongs to the pseudouridine synthase TruB family. Type 1 subfamily.

It catalyses the reaction uridine(55) in tRNA = pseudouridine(55) in tRNA. In terms of biological role, responsible for synthesis of pseudouridine from uracil-55 in the psi GC loop of transfer RNAs. In Trichormus variabilis (strain ATCC 29413 / PCC 7937) (Anabaena variabilis), this protein is tRNA pseudouridine synthase B.